The sequence spans 485 residues: Maturase K (485 aa).

The protein belongs to the intron maturase 2 family. MatK subfamily.

Its subcellular location is the plastid. It localises to the chloroplast. In terms of biological role, usually encoded in the trnK tRNA gene intron. Probably assists in splicing its own and other chloroplast group II introns. In Malus domestica (Apple), this protein is Maturase K.